Here is a 274-residue protein sequence, read N- to C-terminus: NADPH-dependent 7-cyano-7-deazaguanine reductase (274 aa).

Residue 80-82 (VES) participates in substrate binding. 82–83 (SK) is an NADPH binding site. Cys181 functions as the Thioimide intermediate in the catalytic mechanism. Residue Asp188 is the Proton donor of the active site. 220-221 (HE) contributes to the substrate binding site. 249–250 (RG) provides a ligand contact to NADPH.

It belongs to the GTP cyclohydrolase I family. QueF type 2 subfamily. In terms of assembly, homodimer.

The protein resides in the cytoplasm. The enzyme catalyses 7-aminomethyl-7-carbaguanine + 2 NADP(+) = 7-cyano-7-deazaguanine + 2 NADPH + 3 H(+). Its pathway is tRNA modification; tRNA-queuosine biosynthesis. In terms of biological role, catalyzes the NADPH-dependent reduction of 7-cyano-7-deazaguanine (preQ0) to 7-aminomethyl-7-deazaguanine (preQ1). In Burkholderia pseudomallei (strain 1710b), this protein is NADPH-dependent 7-cyano-7-deazaguanine reductase.